Reading from the N-terminus, the 146-residue chain is Ribosome-binding factor A (146 aa).

A disordered region spans residues 125–146 (RDLDADDDKTKDDRAKDDKDSE).

It belongs to the RbfA family. As to quaternary structure, monomer. Binds 30S ribosomal subunits, but not 50S ribosomal subunits or 70S ribosomes.

The protein localises to the cytoplasm. Functionally, one of several proteins that assist in the late maturation steps of the functional core of the 30S ribosomal subunit. Associates with free 30S ribosomal subunits (but not with 30S subunits that are part of 70S ribosomes or polysomes). Required for efficient processing of 16S rRNA. May interact with the 5'-terminal helix region of 16S rRNA. The polypeptide is Ribosome-binding factor A (Mesorhizobium japonicum (strain LMG 29417 / CECT 9101 / MAFF 303099) (Mesorhizobium loti (strain MAFF 303099))).